A 291-amino-acid chain; its full sequence is N-acetylmannosamine kinase (291 aa).

Residues 5–12 (AIDIGGTK) and 132–139 (GVGGGVVS) contribute to the ATP site. His-156, Cys-166, Cys-168, and Cys-173 together coordinate Zn(2+).

Belongs to the ROK (NagC/XylR) family. NanK subfamily. Homodimer.

It carries out the reaction an N-acyl-D-mannosamine + ATP = an N-acyl-D-mannosamine 6-phosphate + ADP + H(+). It functions in the pathway amino-sugar metabolism; N-acetylneuraminate degradation; D-fructose 6-phosphate from N-acetylneuraminate: step 2/5. Functionally, catalyzes the phosphorylation of N-acetylmannosamine (ManNAc) to ManNAc-6-P. The sequence is that of N-acetylmannosamine kinase from Shigella flexneri serotype 5b (strain 8401).